The sequence spans 178 residues: Probable DNA-directed RNA polymerase subunit delta (178 aa).

In terms of domain architecture, HTH HARE-type spans 14–81 (LSLIDVAHFI…GNNTWGLRAW (68 aa)). Disordered regions lie at residues 89 to 122 (EEVQTQTTPKKKRKSDDDDDEDEEILDDDVDYDD) and 141 to 178 (LDEDEDDDDHLPDGIEGDLATVEDDYTDGDYTEDPEDK). Composition is skewed to acidic residues over residues 105 to 122 (DDDDEDEEILDDDVDYDD), 141 to 150 (LDEDEDDDDH), and 161 to 178 (TVEDDYTDGDYTEDPEDK).

This sequence belongs to the RpoE family. In terms of assembly, RNAP is composed of a core of 2 alpha, a beta and a beta' subunits. The core is associated with a delta subunit and one of several sigma factors.

Functionally, participates in both the initiation and recycling phases of transcription. In the presence of the delta subunit, RNAP displays an increased specificity of transcription, a decreased affinity for nucleic acids, and an increased efficiency of RNA synthesis because of enhanced recycling. The sequence is that of Probable DNA-directed RNA polymerase subunit delta from Listeria innocua serovar 6a (strain ATCC BAA-680 / CLIP 11262).